The chain runs to 221 residues: Octanoyltransferase (221 aa).

The 186-residue stretch at 36–221 folds into the BPL/LPL catalytic domain; sequence KKEDNQLFFC…LRSIFMEIFA (186 aa). Residues 81–88, 154–156, and 167–169 each bind substrate; these read RGGDITYH, AIG, and GFA. Residue cysteine 185 is the Acyl-thioester intermediate of the active site.

The protein belongs to the LipB family.

Its subcellular location is the cytoplasm. The catalysed reaction is octanoyl-[ACP] + L-lysyl-[protein] = N(6)-octanoyl-L-lysyl-[protein] + holo-[ACP] + H(+). Its pathway is protein modification; protein lipoylation via endogenous pathway; protein N(6)-(lipoyl)lysine from octanoyl-[acyl-carrier-protein]: step 1/2. In terms of biological role, catalyzes the transfer of endogenously produced octanoic acid from octanoyl-acyl-carrier-protein onto the lipoyl domains of lipoate-dependent enzymes. Lipoyl-ACP can also act as a substrate although octanoyl-ACP is likely to be the physiological substrate. In Parabacteroides distasonis (strain ATCC 8503 / DSM 20701 / CIP 104284 / JCM 5825 / NCTC 11152), this protein is Octanoyltransferase.